The following is a 272-amino-acid chain: Dermonecrotic toxin LvSicTox-alphaIC1biv (272 aa).

Residue His-5 is part of the active site. Residues Glu-25 and Asp-27 each coordinate Mg(2+). Catalysis depends on His-41, which acts as the Nucleophile. 2 disulfide bridges follow: Cys-45-Cys-51 and Cys-47-Cys-189. Asp-84 is a Mg(2+) binding site.

The protein belongs to the arthropod phospholipase D family. Class II subfamily. It depends on Mg(2+) as a cofactor. As to expression, expressed by the venom gland.

The protein localises to the secreted. It carries out the reaction an N-(acyl)-sphingosylphosphocholine = an N-(acyl)-sphingosyl-1,3-cyclic phosphate + choline. The catalysed reaction is an N-(acyl)-sphingosylphosphoethanolamine = an N-(acyl)-sphingosyl-1,3-cyclic phosphate + ethanolamine. It catalyses the reaction a 1-acyl-sn-glycero-3-phosphocholine = a 1-acyl-sn-glycero-2,3-cyclic phosphate + choline. The enzyme catalyses a 1-acyl-sn-glycero-3-phosphoethanolamine = a 1-acyl-sn-glycero-2,3-cyclic phosphate + ethanolamine. Its function is as follows. Dermonecrotic toxins cleave the phosphodiester linkage between the phosphate and headgroup of certain phospholipids (sphingolipid and lysolipid substrates), forming an alcohol (often choline) and a cyclic phosphate. This toxin acts on sphingomyelin (SM). It may also act on ceramide phosphoethanolamine (CPE), lysophosphatidylcholine (LPC) and lysophosphatidylethanolamine (LPE), but not on lysophosphatidylserine (LPS), and lysophosphatidylglycerol (LPG). It acts by transphosphatidylation, releasing exclusively cyclic phosphate products as second products. Induces dermonecrosis, hemolysis, increased vascular permeability, edema, inflammatory response, and platelet aggregation. The protein is Dermonecrotic toxin LvSicTox-alphaIC1biv of Loxosceles variegata (Recluse spider).